We begin with the raw amino-acid sequence, 422 residues long: Glycine amidinotransferase, mitochondrial (422 aa).

The transit peptide at 1–37 directs the protein to the mitochondrion; that stretch reads MLRVRCLRGGSRGAEAAHFIGSRLGRAFTGWVQRSLQ. Catalysis depends on residues Asp253 and His302. Cys406 functions as the Amidino-cysteine intermediate in the catalytic mechanism. The residue at position 416 (Thr416) is a Phosphothreonine.

Belongs to the amidinotransferase family. Homodimer.

It is found in the mitochondrion inner membrane. The enzyme catalyses L-arginine + glycine = guanidinoacetate + L-ornithine. Its pathway is amine and polyamine biosynthesis; creatine biosynthesis; creatine from L-arginine and glycine: step 1/2. Catalyzes the biosynthesis of guanidinoacetate, the immediate precursor of creatine. Creatine plays a vital role in energy metabolism in muscle tissues. May play a role in embryonic and central nervous system development. The polypeptide is Glycine amidinotransferase, mitochondrial (Gallus gallus (Chicken)).